A 185-amino-acid polypeptide reads, in one-letter code: Prorelaxin 1 (185 aa).

The first 22 residues, 1-22, serve as a signal peptide directing secretion; that stretch reads MSSRFLLQLLGFWLLLSQPCRT. Cystine bridges form between Cys36–Cys171, Cys48–Cys185, and Cys170–Cys175. The propeptide at 58–156 is connecting peptide; it reads SQEEPALLAR…LKYLQSDTHS (99 aa). A disordered region spans residues 135-161; that stretch reads RLGEAEDGSPPGLKYLQSDTHSRKKRE.

Belongs to the insulin family. In terms of assembly, heterodimer of a B chain and an A chain linked by two disulfide bonds.

The protein resides in the secreted. In terms of biological role, relaxin is an ovarian hormone that acts with estrogen to produce dilatation of the birth canal in many mammals. This is Prorelaxin 1 (Rln1) from Mus musculus (Mouse).